We begin with the raw amino-acid sequence, 194 residues long: Aminodeoxychorismate/anthranilate synthase component 2 (194 aa).

In terms of domain architecture, Glutamine amidotransferase type-1 spans methionine 1 to alanine 194. Active-site residues include cysteine 79, histidine 168, and glutamate 170.

Monomer. Heterodimer consisting of two non-identical subunits: a glutamine amidotransferase subunit (PabA) and a aminodeoxychorismate synthase subunit (PabB).

The enzyme catalyses chorismate + L-glutamine = anthranilate + pyruvate + L-glutamate + H(+). It carries out the reaction chorismate + L-glutamine = 4-amino-4-deoxychorismate + L-glutamate. It participates in amino-acid biosynthesis; L-tryptophan biosynthesis; L-tryptophan from chorismate: step 1/5. Its pathway is cofactor biosynthesis; tetrahydrofolate biosynthesis; 4-aminobenzoate from chorismate: step 1/2. Its function is as follows. Part of a heterodimeric complex that catalyzes the two-step biosynthesis of 4-amino-4-deoxychorismate (ADC), a precursor of p-aminobenzoate (PABA) and tetrahydrofolate. In the first step, a glutamine amidotransferase (PabA) generates ammonia as a substrate that, along with chorismate, is used in the second step, catalyzed by aminodeoxychorismate synthase (PabB) to produce ADC. PabA converts glutamine into glutamate only in the presence of stoichiometric amounts of PabB. Also involved in the biosynthesis of anthranilate. Complements a glutamine amidotransferase-negative mutant. This chain is Aminodeoxychorismate/anthranilate synthase component 2, found in Bacillus subtilis (strain 168).